We begin with the raw amino-acid sequence, 292 residues long: E3 ubiquitin-protein ligase trim-21 (292 aa).

An RING-type zinc finger spans residues 6–52 (CEICDDDFSSEEDGDHNPRNLKCSHTLCEGCIKKLLKNGRVVCPFCR). The segment at 90–137 (NFPPKCVEHPYNVAEFACIESNCSSKNKLMCQTCEEFGAHKGHAKELL) adopts a B box-type zinc-finger fold. Zn(2+) contacts are provided by Cys95, His98, Cys123, and His129. The stretch at 152–179 (INQLKLNIQNCTVKKNELEEAVVKSEQL) forms a coiled coil.

It belongs to the TRIM/RBCC family. As to quaternary structure, interacts with E2 ubiquitin-conjugating enzyme ubc-21. Interacts with ced-6; this mediates interaction of trim-21 with ced-1 and is required for ced-1 ubiquitination. Interacts with nck-1; the interaction is required for ced-1 ubiquitination. In early larva, observed mainly in pharyngeal and body wall muscle cells.

The protein resides in the cytoplasm. It catalyses the reaction S-ubiquitinyl-[E2 ubiquitin-conjugating enzyme]-L-cysteine + [acceptor protein]-L-lysine = [E2 ubiquitin-conjugating enzyme]-L-cysteine + N(6)-ubiquitinyl-[acceptor protein]-L-lysine.. It participates in protein modification; protein ubiquitination. In terms of biological role, E3 ubiquitin-protein ligase which catalyzes 'Lys-48'-linked polyubiquitination of ced-1, promoting its proteasomal degradation to maintain appropriate ced-1 levels for apoptotic cell clearance. Acts together with E2 ubiquitin-conjugating enzyme ubc-21. The chain is E3 ubiquitin-protein ligase trim-21 from Caenorhabditis elegans.